The chain runs to 576 residues: MDKELFRHQIEVAAKRKKAALVIKHAKVMDVFNQEWIDADVAVENGQIVGIGEYEGEQELDAVGQMLVPGFIDGHVHIESSMVTPAEFSKAVVPHGVTTVVTDPHEIANVSGITGIRFMLEEAKKAALHIYFMLPSCVPAVSFERSGATLKAKDLKPLYQEKEVLGLAEVMDYVGVEQAEEDMLQKLLDAQHENKLIDGHLAGLTDRLINVYRTASVQTDHEVTTAQEALERVKRGMYVMLREGSVAKNVKNVLPAVNEKNARRFFFCTDDKHLDDLMAQGSIDEQVRMSIKEGLDPFLAYQMGSLNAAECFGLKTKGAIAPGYDADFMLVSDFHHVDITSVFIAGELVAQNGEYKPSVEKIAPSPALLQSVHAIDVQEEDIALPITGDQHMNVIRIIPNQLETKLEQVSPSEMNGQFTSDTGRDVLKMVLVERHQGLSEMGVGIVSGFGIKQGAIATTVAHDSHNLIAVGTNDADIIKAIEALKEAGGGLTVVKEGQSLHTLPLPISGLLSDQPAHLVNESLHSLHEALKETGFSLDFNPFLTLSFLALPVIPDVKMTTKGLFDVRNFQHLPIQS.

This sequence belongs to the metallo-dependent hydrolases superfamily. Adenine deaminase family. Mn(2+) is required as a cofactor.

It carries out the reaction adenine + H2O + H(+) = hypoxanthine + NH4(+). The sequence is that of Adenine deaminase from Bacillus pumilus (strain SAFR-032).